Here is a 150-residue protein sequence, read N- to C-terminus: UPF0179 protein Mbur_1033 (150 aa).

It belongs to the UPF0179 family.

This is UPF0179 protein Mbur_1033 from Methanococcoides burtonii (strain DSM 6242 / NBRC 107633 / OCM 468 / ACE-M).